The sequence spans 463 residues: Bifunctional protein HldE (463 aa).

The tract at residues 1–315 (MRKILVIGDL…LILNQTHPKI (315 aa)) is ribokinase. 191 to 194 (NRFE) contributes to the ATP binding site. Residue D260 is part of the active site. The segment at 334–463 (FTNGCFDILH…IEKIKRAYND (130 aa)) is cytidylyltransferase.

The protein in the N-terminal section; belongs to the carbohydrate kinase PfkB family. This sequence in the C-terminal section; belongs to the cytidylyltransferase family. Homodimer.

The enzyme catalyses D-glycero-beta-D-manno-heptose 7-phosphate + ATP = D-glycero-beta-D-manno-heptose 1,7-bisphosphate + ADP + H(+). It catalyses the reaction D-glycero-beta-D-manno-heptose 1-phosphate + ATP + H(+) = ADP-D-glycero-beta-D-manno-heptose + diphosphate. It participates in nucleotide-sugar biosynthesis; ADP-L-glycero-beta-D-manno-heptose biosynthesis; ADP-L-glycero-beta-D-manno-heptose from D-glycero-beta-D-manno-heptose 7-phosphate: step 1/4. The protein operates within nucleotide-sugar biosynthesis; ADP-L-glycero-beta-D-manno-heptose biosynthesis; ADP-L-glycero-beta-D-manno-heptose from D-glycero-beta-D-manno-heptose 7-phosphate: step 3/4. Its function is as follows. Catalyzes the phosphorylation of D-glycero-D-manno-heptose 7-phosphate at the C-1 position to selectively form D-glycero-beta-D-manno-heptose-1,7-bisphosphate. Catalyzes the ADP transfer from ATP to D-glycero-beta-D-manno-heptose 1-phosphate, yielding ADP-D-glycero-beta-D-manno-heptose. This chain is Bifunctional protein HldE, found in Helicobacter acinonychis (strain Sheeba).